The following is an 882-amino-acid chain: Alanine--tRNA ligase (882 aa).

Zn(2+) contacts are provided by His570, His574, Cys672, and His676.

It belongs to the class-II aminoacyl-tRNA synthetase family. It depends on Zn(2+) as a cofactor.

The protein resides in the cytoplasm. It carries out the reaction tRNA(Ala) + L-alanine + ATP = L-alanyl-tRNA(Ala) + AMP + diphosphate. In terms of biological role, catalyzes the attachment of alanine to tRNA(Ala) in a two-step reaction: alanine is first activated by ATP to form Ala-AMP and then transferred to the acceptor end of tRNA(Ala). Also edits incorrectly charged Ser-tRNA(Ala) and Gly-tRNA(Ala) via its editing domain. The polypeptide is Alanine--tRNA ligase (Xanthomonas euvesicatoria pv. vesicatoria (strain 85-10) (Xanthomonas campestris pv. vesicatoria)).